Consider the following 163-residue polypeptide: IQSTSMDQGILTEDSMNSFIRTLIQAGIWKNKVPKQTARTKDGMQTTVKKTEAEADAMASKDTRLGFQPVVSVDAELLRQQRRFSSPRVLLSENTPLEPPPLYLTEEPMVLNRTSRRKREGKSHRGEYSVCDSESRWVTDKSSAVDIRGHQVTVLGEIRMGSS.

An N-terminal signal peptide occupies residues 1–3 (IQS). Positions 4-119 (TSMDQGILTE…VLNRTSRRKR (116 aa)) are excised as a propeptide. N-linked (GlcNAc...) asparagine glycosylation is present at Asn-112. A disordered region spans residues 114–133 (TSRRKREGKSHRGEYSVCDS). The span at 123 to 133 (SHRGEYSVCDS) shows a compositional bias: basic and acidic residues.

The protein belongs to the NGF-beta family.

It localises to the secreted. Seems to promote the survival of visceral and proprioceptive sensory neurons. This is Neurotrophin-3 (NTF3) from Lichanura trivirgata (Rosy boa).